The chain runs to 116 residues: Large ribosomal subunit protein bL17 (116 aa).

The protein belongs to the bacterial ribosomal protein bL17 family. Part of the 50S ribosomal subunit. Contacts protein L32.

The polypeptide is Large ribosomal subunit protein bL17 (Gloeothece citriformis (strain PCC 7424) (Cyanothece sp. (strain PCC 7424))).